Here is a 116-residue protein sequence, read N- to C-terminus: Small ribosomal subunit protein bS18c (116 aa).

Polar residues predominate over residues 1–13 (MKPSFRNTSPSFR). A disordered region spans residues 1 to 51 (MKPSFRNTSPSFRNRSKPYFRNRSKPYFRNRSKPSFRNTSKRFSPNQQSFR). The span at 14–34 (NRSKPYFRNRSKPYFRNRSKP) shows a compositional bias: basic residues. The span at 35–49 (SFRNTSKRFSPNQQS) shows a compositional bias: polar residues.

The protein belongs to the bacterial ribosomal protein bS18 family. As to quaternary structure, part of the 30S ribosomal subunit.

Its subcellular location is the plastid. The protein resides in the chloroplast. The sequence is that of Small ribosomal subunit protein bS18c from Cryptomeria japonica (Japanese cedar).